The chain runs to 154 residues: Photosystem II extrinsic protein U, chloroplastic (154 aa).

The N-terminal 36 residues, M1–S36, are a transit peptide targeting the chloroplast. Residues R37 to A61 constitute a thylakoid transit peptide.

This sequence belongs to the PsbU family. As to quaternary structure, PSII is composed of 1 copy each of membrane proteins PsbA, PsbB, PsbC, PsbD, PsbE, PsbF, PsbH, PsbI, PsbJ, PsbK, PsbL, PsbM, PsbT, PsbY, PsbZ, Psb30/Ycf12, at least 3 peripheral proteins of the oxygen-evolving complex and a large number of cofactors. It forms dimeric complexes. The extrinsic subunits in red algae are PsbO (OEC33), PsbQ', cytochrome c-550 and PsbU. Post-translationally, predicted to be translocated into the thylakoid lumen by the Tat system. The position of the first transit peptide cleavage has not been experimentally proven.

Its subcellular location is the plastid. The protein resides in the chloroplast thylakoid membrane. One of the extrinsic, lumenal subunits of photosystem II (PSII). PSII is a light-driven water plastoquinone oxidoreductase, using light energy to abstract electrons from H(2)O, generating a proton gradient subsequently used for ATP formation. The extrinsic proteins stabilize the structure of photosystem II oxygen-evolving complex (OEC), the ion environment of oxygen evolution and protect the OEC against heat-induced inactivation. This is Photosystem II extrinsic protein U, chloroplastic from Cyanidium caldarium (Red alga).